The primary structure comprises 202 residues: ATP-dependent Clp protease proteolytic subunit (202 aa).

The active-site Nucleophile is Ser-106. His-131 is an active-site residue.

It belongs to the peptidase S14 family. In terms of assembly, fourteen ClpP subunits assemble into 2 heptameric rings which stack back to back to give a disk-like structure with a central cavity, resembling the structure of eukaryotic proteasomes.

It localises to the cytoplasm. The enzyme catalyses Hydrolysis of proteins to small peptides in the presence of ATP and magnesium. alpha-casein is the usual test substrate. In the absence of ATP, only oligopeptides shorter than five residues are hydrolyzed (such as succinyl-Leu-Tyr-|-NHMec, and Leu-Tyr-Leu-|-Tyr-Trp, in which cleavage of the -Tyr-|-Leu- and -Tyr-|-Trp bonds also occurs).. Functionally, cleaves peptides in various proteins in a process that requires ATP hydrolysis. Has a chymotrypsin-like activity. Plays a major role in the degradation of misfolded proteins. This is ATP-dependent Clp protease proteolytic subunit from Shewanella baltica (strain OS223).